The chain runs to 672 residues: Nuclear RNA export factor 1 (672 aa).

2 disordered regions span residues 1-52 (MPKR…SFKP) and 73-101 (DEDD…IPRG). The span at 40-49 (RKDRNKRRVS) shows a compositional bias: basic residues. The RRM domain maps to 113-193 (WYQVTLQNAQ…PRVRSGIPLV (81 aa)). LRR repeat units follow at residues 255-280 (DLEA…KRLP), 281-304 (NLKI…LRNL), 305-332 (SILE…EVRR), and 333-360 (KFPK…GRLL). Residues 375–529 (VVRQFLDQYF…FCIRNETIFI (155 aa)) enclose the NTF2 domain. The interval 541 to 564 (KRSQHQPAPGAMPSTSSAVTSPQA) is disordered. The segment covering 553-563 (PSTSSAVTSPQ) has biased composition (polar residues). A Phosphoserine modification is found at Ser561. The TAP-C domain maps to 618–672 (STKMQMIEAMSAQSQMNVIWSRKCLEETNWDFNHAAFVFEKLFKENKIPPEAFMK).

This sequence belongs to the NXF family. In terms of assembly, interacts with Nxt1. Interacts with ZC3H3. Forms a complex with Nup358/RanBP2, RanGAP and Nxt1. Interacts with Nup54 and Nup58. Interacts with Orc3 and Hpr1. Expressed ubiquitously.

Its subcellular location is the nucleus. The protein localises to the nucleoplasm. It localises to the cytoplasm. It is found in the nucleus envelope. In terms of biological role, mediates the export of the majority of mRNAs from the nucleus to the cytoplasm. In ovarian follicle cells, plays a role in transposable element silencing regulation by enabling the nuclear export of flamenco (flam) transcripts and subsequent piRNA biogenesis. The protein is Nuclear RNA export factor 1 of Drosophila melanogaster (Fruit fly).